The following is a 356-amino-acid chain: GTPase HflX (356 aa).

Positions 180–356 constitute a Hflx-type G domain; sequence PSIGIVGYTN…KIYQLATQLS (177 aa). GTP-binding positions include 186-193, 211-215, 232-235, 300-303, and 334-336; these read GYTNSGKT, FTTMS, DTVG, NKID, and SAL. Residues T193 and T213 each contribute to the Mg(2+) site.

Belongs to the TRAFAC class OBG-HflX-like GTPase superfamily. HflX GTPase family. In terms of assembly, monomer. Associates with the 50S ribosomal subunit. Does not associate with 70S ribosomes. Mg(2+) serves as cofactor.

Its subcellular location is the cytoplasm. Its activity is regulated as follows. GTPase activity is stimulated by the presence of 50S ribosomal subunits. Hydrolysis is probably regulated by the HflX N-terminal domain. In terms of biological role, GTPase that associates with the 50S ribosomal subunit and may have a role during protein synthesis or ribosome biogenesis. Specific for GTP. The protein is GTPase HflX of Saccharolobus solfataricus (strain ATCC 35092 / DSM 1617 / JCM 11322 / P2) (Sulfolobus solfataricus).